The primary structure comprises 85 residues: Large ribosomal subunit protein bL27 (85 aa).

Residues 1 to 21 (MAHKKGVGSTRNGRDSESKRL) are disordered.

Belongs to the bacterial ribosomal protein bL27 family.

The protein is Large ribosomal subunit protein bL27 of Geobacter sulfurreducens (strain ATCC 51573 / DSM 12127 / PCA).